Reading from the N-terminus, the 127-residue chain is Large ribosomal subunit protein bL17 (127 aa).

The protein belongs to the bacterial ribosomal protein bL17 family. Part of the 50S ribosomal subunit. Contacts protein L32.

This chain is Large ribosomal subunit protein bL17, found in Mannheimia succiniciproducens (strain KCTC 0769BP / MBEL55E).